Here is a 331-residue protein sequence, read N- to C-terminus: Phosphoribosylformylglycinamidine cyclo-ligase (331 aa).

This sequence belongs to the AIR synthase family.

The protein localises to the cytoplasm. The catalysed reaction is 2-formamido-N(1)-(5-O-phospho-beta-D-ribosyl)acetamidine + ATP = 5-amino-1-(5-phospho-beta-D-ribosyl)imidazole + ADP + phosphate + H(+). It functions in the pathway purine metabolism; IMP biosynthesis via de novo pathway; 5-amino-1-(5-phospho-D-ribosyl)imidazole from N(2)-formyl-N(1)-(5-phospho-D-ribosyl)glycinamide: step 2/2. The chain is Phosphoribosylformylglycinamidine cyclo-ligase from Clostridium kluyveri (strain NBRC 12016).